We begin with the raw amino-acid sequence, 517 residues long: Crotonobetaine/carnitine--CoA ligase (517 aa).

This sequence belongs to the ATP-dependent AMP-binding enzyme family.

It carries out the reaction 4-(trimethylamino)butanoate + ATP + CoA = 4-(trimethylamino)butanoyl-CoA + AMP + diphosphate. The enzyme catalyses crotonobetaine + ATP + CoA = crotonobetainyl-CoA + AMP + diphosphate. It catalyses the reaction (R)-carnitine + ATP + CoA = (R)-carnitinyl-CoA + AMP + diphosphate. Its pathway is amine and polyamine metabolism; carnitine metabolism. In terms of biological role, catalyzes the transfer of CoA to carnitine, generating the initial carnitinyl-CoA needed for the CaiB reaction cycle. Also has activity toward crotonobetaine and gamma-butyrobetaine. In Salmonella paratyphi C (strain RKS4594), this protein is Crotonobetaine/carnitine--CoA ligase.